We begin with the raw amino-acid sequence, 97 residues long: C-C motif chemokine 8 (97 aa).

The N-terminal stretch at 1–23 is a signal peptide; that stretch reads MKIYAVLLCLLLIAVPVSPEKLT. Disulfide bonds link cysteine 32/cysteine 57 and cysteine 33/cysteine 73.

This sequence belongs to the intercrine beta (chemokine CC) family. As to quaternary structure, monomer or homodimer; in equilibrium.

It localises to the secreted. Its function is as follows. Chemotactic factor that attracts monocytes. This protein can bind heparin. The sequence is that of C-C motif chemokine 8 (Ccl8) from Mus musculus (Mouse).